The following is a 54-amino-acid chain: Sec-independent protein translocase protein TatA (54 aa).

Residues 1–21 form a helical membrane-spanning segment; that stretch reads MGMSFSHLLIVLLIIFVLFGA.

Belongs to the TatA/E family. As to quaternary structure, the Tat system comprises two distinct complexes: a TatABC complex, containing multiple copies of TatA, TatB and TatC subunits, and a separate TatA complex, containing only TatA subunits. Substrates initially bind to the TatABC complex, which probably triggers association of the separate TatA complex to form the active translocon.

It localises to the cell inner membrane. Functionally, part of the twin-arginine translocation (Tat) system that transports large folded proteins containing a characteristic twin-arginine motif in their signal peptide across membranes. TatA could form the protein-conducting channel of the Tat system. In Rickettsia prowazekii (strain Madrid E), this protein is Sec-independent protein translocase protein TatA.